The chain runs to 325 residues: Small ribosomal subunit protein RACK1 (325 aa).

7 WD repeats span residues 5–48 (QMKL…WDVD), 58–99 (IGRP…WDLN), 100–141 (QGVS…WNTL), 143–186 (QCKY…WNLG), 187–227 (NCRL…LWDL), 228–268 (NEGK…WDLE), and 269–320 (DKKE…YQVS).

It belongs to the WD repeat G protein beta family. Ribosomal protein RACK1 subfamily.

Functionally, required for the expression of antimicrobial peptide nlp-29 in response to fungal infection or physical injury. The sequence is that of Small ribosomal subunit protein RACK1 (rack-1) from Caenorhabditis elegans.